Reading from the N-terminus, the 548-residue chain is Membrane protein insertase YidC (548 aa).

The next 5 helical transmembrane spans lie at 6–26, 349–369, 424–444, 455–475, and 503–523; these read NLIL…WESD, TVFQ…TLLV, LGGC…YWAL, FALW…PILM, and PIIF…YWLV.

Belongs to the OXA1/ALB3/YidC family. Type 1 subfamily. As to quaternary structure, interacts with the Sec translocase complex via SecD. Specifically interacts with transmembrane segments of nascent integral membrane proteins during membrane integration.

It is found in the cell inner membrane. Required for the insertion and/or proper folding and/or complex formation of integral membrane proteins into the membrane. Involved in integration of membrane proteins that insert both dependently and independently of the Sec translocase complex, as well as at least some lipoproteins. Aids folding of multispanning membrane proteins. This is Membrane protein insertase YidC from Aeromonas salmonicida (strain A449).